Reading from the N-terminus, the 333-residue chain is Ornithine carbamoyltransferase (333 aa).

Carbamoyl phosphate-binding positions include 56 to 59 (STRT), Arg-107, and 134 to 137 (HPTQ). L-ornithine-binding positions include Asn-167, Asp-231, and 235-236 (SM). Residues 273 to 274 (CL) and Arg-318 each bind carbamoyl phosphate.

This sequence belongs to the aspartate/ornithine carbamoyltransferase superfamily. OTCase family.

The protein resides in the cytoplasm. It catalyses the reaction carbamoyl phosphate + L-ornithine = L-citrulline + phosphate + H(+). It functions in the pathway amino-acid degradation; L-arginine degradation via ADI pathway; carbamoyl phosphate from L-arginine: step 2/2. In terms of biological role, reversibly catalyzes the transfer of the carbamoyl group from carbamoyl phosphate (CP) to the N(epsilon) atom of ornithine (ORN) to produce L-citrulline. The chain is Ornithine carbamoyltransferase from Clostridium botulinum (strain ATCC 19397 / Type A).